We begin with the raw amino-acid sequence, 271 residues long: 5-amino-6-(5-phospho-D-ribitylamino)uracil phosphatase YbjI (271 aa).

Aspartate 9 (nucleophile) is an active-site residue. Aspartate 9 serves as a coordination point for Mg(2+). Methionine 10 lines the phosphate pocket. Aspartate 11 is a binding site for Mg(2+). Residues 44–45 (SG) and lysine 192 each bind phosphate. Aspartate 215 serves as a coordination point for Mg(2+). Residue asparagine 218 coordinates phosphate.

Belongs to the HAD-like hydrolase superfamily. Cof family. The cofactor is Mg(2+). It depends on Mn(2+) as a cofactor. Co(2+) is required as a cofactor. Requires Zn(2+) as cofactor.

It catalyses the reaction 5-amino-6-(5-phospho-D-ribitylamino)uracil + H2O = 5-amino-6-(D-ribitylamino)uracil + phosphate. It participates in cofactor biosynthesis; riboflavin biosynthesis; 5-amino-6-(D-ribitylamino)uracil from GTP: step 4/4. In terms of biological role, catalyzes the dephosphorylation of 5-amino-6-(5-phospho-D-ribitylamino)uracil, and thus could be involved in the riboflavin biosynthesis pathway. Is also able to dephosphorylate flavin mononucleotide (FMN), erythrose 4-phosphate and other phosphoric acid esters. In Escherichia coli (strain K12), this protein is 5-amino-6-(5-phospho-D-ribitylamino)uracil phosphatase YbjI (ybjI).